Here is a 147-residue protein sequence, read N- to C-terminus: Large ribosomal subunit protein bL9 (147 aa).

The protein belongs to the bacterial ribosomal protein bL9 family.

Binds to the 23S rRNA. The protein is Large ribosomal subunit protein bL9 of Trichlorobacter lovleyi (strain ATCC BAA-1151 / DSM 17278 / SZ) (Geobacter lovleyi).